The sequence spans 205 residues: High frequency lysogenization protein HflD homolog (205 aa).

It belongs to the HflD family.

It is found in the cytoplasm. The protein resides in the cell inner membrane. This is High frequency lysogenization protein HflD homolog from Shewanella halifaxensis (strain HAW-EB4).